The sequence spans 146 residues: Hemoglobin subunit beta (146 aa).

Residues 2-146 enclose the Globin domain; that stretch reads FLTAEEKSLV…VANALAHKYH (145 aa). At S44 the chain carries Phosphoserine. K59 is modified (N6-acetyllysine). H63 is a heme b binding site. Residue K82 is modified to N6-acetyllysine. H92 is a binding site for heme b. C93 is subject to S-nitrosocysteine. N6-acetyllysine is present on K144.

It belongs to the globin family. Heterotetramer of two alpha chains and two beta chains. As to expression, red blood cells.

Involved in oxygen transport from the lung to the various peripheral tissues. The sequence is that of Hemoglobin subunit beta (HBB) from Proteles cristata (Aardwolf).